Here is an 809-residue protein sequence, read N- to C-terminus: G-type lectin S-receptor-like serine/threonine-protein kinase At1g61480 (809 aa).

The N-terminal stretch at 1–24 (MGKKRIMFFASLLLITIFLSFSYA) is a signal peptide. Residues 25–144 (GITRESPLSI…NSGRTLWESF (120 aa)) form the Bulb-type lectin domain. Residues 25-425 (GITRESPLSI…SELGGNKRNK (401 aa)) lie on the Extracellular side of the membrane. N-linked (GlcNAc...) asparagine glycans are attached at residues Asn53, Asn88, Asn94, Asn103, Asn117, Asn134, and Asn236. The EGF-like domain occupies 278–314 (PENSCDIYGFCGPFGICVMSVPPKCKCFKGFVPKSIE). 2 disulfides stabilise this stretch: Cys282–Cys294 and Cys288–Cys302. 2 N-linked (GlcNAc...) asparagine glycosylation sites follow: Asn320 and Asn375. The region spanning 333-415 (CQGNTNGKTV…GEILSIRLAS (83 aa)) is the PAN domain. Cystine bridges form between Cys368–Cys389 and Cys372–Cys378. A helical transmembrane segment spans residues 426 to 446 (IIVASIVSLSLFVILAFAAFC). Topologically, residues 447-809 (FLRYKVKHTV…EMTQSVILGR (363 aa)) are cytoplasmic. The Protein kinase domain maps to 496–781 (FSLSNKLGQG…DLTSPKQPTF (286 aa)). ATP contacts are provided by residues 502–510 (LGQGGFGSV) and Lys524. Residues Ser530 and Ser545 each carry the phosphoserine modification. The tract at residues 585 to 602 (RKRLEIDWPKRFNIIEGI) is caM-binding. The active-site Proton acceptor is the Asp621. Residues Ser625 and Ser638 each carry the phosphoserine modification. The residue at position 655 (Thr655) is a Phosphothreonine. Phosphoserine occurs at positions 698 and 792.

This sequence belongs to the protein kinase superfamily. Ser/Thr protein kinase family.

The protein localises to the cell membrane. The catalysed reaction is L-seryl-[protein] + ATP = O-phospho-L-seryl-[protein] + ADP + H(+). It carries out the reaction L-threonyl-[protein] + ATP = O-phospho-L-threonyl-[protein] + ADP + H(+). The polypeptide is G-type lectin S-receptor-like serine/threonine-protein kinase At1g61480 (Arabidopsis thaliana (Mouse-ear cress)).